Consider the following 422-residue polypeptide: MKDLKVAVVGLGYVGLPLAVEFGKKRTVVGFDINQGRIAELRQGIDSTLEVDAAELKEASELSFTFNLQDLQKCNVFIVTVPTPIDEHKQPDLTPLVKASESIGKVLKKGDIVIYESTVYPGATEEDCVPVLEKFSGLRFNEDFFAGYSPERINPGDKEHRVSSIKKVTSGSTPEIAELVDSLYREIITAGTHKASSIKVAEAAKVIENTQRDLNIALINELAIIFNRMGIDTEAVLKAAGTKWNFMPFRPGLVGGHCIGVDPYYLTHKAQSIGYHPEIILAGRRLNDGMGAYVVSQLVKAMLKRRIHVDGARVLLMGLTFKENCPDLRNTKVVDIVRELAEYNIQVDVFDPWVSAEDAMHEYGITPVGTPSHGAYDGIILAVAHSEFKNMGAENIRKLGKAEHVLYDLKYLLDEDKSDLRL.

Val-14, Asp-32, Arg-37, Thr-83, and Thr-118 together coordinate NAD(+). Cys-258 serves as the catalytic Nucleophile. Arg-329 contacts NAD(+).

This sequence belongs to the UDP-glucose/GDP-mannose dehydrogenase family.

The catalysed reaction is UDP-N-acetyl-alpha-D-glucosamine + 2 NAD(+) + H2O = UDP-2-acetamido-2-deoxy-alpha-D-glucuronate + 2 NADH + 3 H(+). The protein operates within bacterial outer membrane biogenesis; LPS O-antigen biosynthesis. With respect to regulation, requires either potassium or ammonium-containing salts for activity. Functionally, dehydrogenase required for the biosynthesis of the B-band O antigen of serotype O6 lipopolysaccharide. Is also required for flagellin glycosylation. Catalyzes the conversion of UDP-N-acetylglucosamine (UDP-GlcNAc) to UDP-N-acetylglucosaminuronic acid (UDP-GlcNAcA). Can also catalyze the conversion of UDP-N-acetyl-galactosamine (UDP-GalNAc) to UDP-N-acetylgalactosaminuronic acid (UDP-GalNAcA), with low efficiency. Can use NAD(+) or NADP(+), with a preference for NAD(+). The protein is UDP-N-acetyl-D-glucosamine 6-dehydrogenase of Pseudomonas aeruginosa.